The sequence spans 155 residues: Plastocyanin, chloroplastic (155 aa).

Residues 1-58 (MAALSSAAVSVPSFAAATPMRSSRSSRMVVRASLGKKAASAAVAMAAGAMLLGGSAMA) constitute a chloroplast transit peptide. Residues 59–155 (QDVLLGANGG…AGMVGKVTVN (97 aa)) enclose the Plastocyanin-like domain. Cu cation contacts are provided by His-95, Cys-140, His-143, and Met-148.

Belongs to the plastocyanin family. The cofactor is Cu(2+).

It localises to the plastid. The protein localises to the chloroplast thylakoid membrane. Functionally, participates in electron transfer between P700 and the cytochrome b6-f complex in photosystem I. The sequence is that of Plastocyanin, chloroplastic (PETE) from Hordeum vulgare (Barley).